Reading from the N-terminus, the 377-residue chain is Cilia- and flagella-associated protein 263 (377 aa).

Coiled-coil stretches lie at residues 95–243 and 280–354; these read LTAD…NQEL and LRKE…SLKG.

Belongs to the CFAP263 family. As to quaternary structure, forms a complex with CFAP184; the interaction is required for functional activity in cilia. Interacts with HAP1 and PCM1.

It is found in the cytoplasm. The protein resides in the cytoskeleton. Its subcellular location is the microtubule organizing center. The protein localises to the centrosome. It localises to the centriolar satellite. It is found in the cell projection. The protein resides in the cilium. Its function is as follows. Component of centriolar satellites contributing to primary cilium formation. In complex with CFAP263, acts as a regulator of ciliary beating that connects radial spoke 3 (RS3) to the inner dynein arm (IDA) and the nexin-dynein regulatory complex (N-DRC). The complex is positioned parallel to N-DRC and forms a connection between the arch at the base of RS3, the IDA tail and N-DRC. In Homo sapiens (Human), this protein is Cilia- and flagella-associated protein 263.